The primary structure comprises 207 residues: BTB/POZ domain-containing protein At1g01640 (207 aa).

Positions 24–94 (TDVLVKPGEE…LYSGNLKAPY (71 aa)) constitute a BTB domain.

In terms of assembly, interacts with CUL3A.

It functions in the pathway protein modification; protein ubiquitination. Its function is as follows. May act as a substrate-specific adapter of an E3 ubiquitin-protein ligase complex (CUL3-RBX1-BTB) which mediates the ubiquitination and subsequent proteasomal degradation of target proteins. In Arabidopsis thaliana (Mouse-ear cress), this protein is BTB/POZ domain-containing protein At1g01640.